A 183-amino-acid polypeptide reads, in one-letter code: Ribulose bisphosphate carboxylase small subunit, chloroplastic 7 (183 aa).

Residues 1–43 (MAAAMMNKTVVVGKESVKGGVAPKVAMSRGGFLNSGIMKKDRD) constitute a chloroplast transit peptide.

This sequence belongs to the RuBisCO small chain family. In terms of assembly, heterohexadecamer of 8 large and 8 small subunits.

The protein localises to the plastid. Its subcellular location is the chloroplast. RuBisCO catalyzes two reactions: the carboxylation of D-ribulose 1,5-bisphosphate, the primary event in carbon dioxide fixation, as well as the oxidative fragmentation of the pentose substrate. Both reactions occur simultaneously and in competition at the same active site. Although the small subunit is not catalytic it is essential for maximal activity. The sequence is that of Ribulose bisphosphate carboxylase small subunit, chloroplastic 7 from Acetabularia peniculus (Green alga).